Here is a 514-residue protein sequence, read N- to C-terminus: 1,25-dihydroxyvitamin D(3) 24-hydroxylase, mitochondrial (514 aa).

The N-terminal 35 residues, 1–35 (MSCPIDKRRPLIAFLRRLRDLGQPPRSVTSKAHVK), are a transit peptide targeting the mitochondrion. Cysteine 462 contributes to the heme binding site.

It belongs to the cytochrome P450 family. Requires heme as cofactor.

Its subcellular location is the mitochondrion. It carries out the reaction calcitriol + 2 reduced [adrenodoxin] + O2 + 2 H(+) = calcitetrol + 2 oxidized [adrenodoxin] + H2O. The enzyme catalyses calcitetrol + 2 reduced [adrenodoxin] + O2 + 2 H(+) = (1S)-1,25-dihydroxy-24-oxocalciol + 2 oxidized [adrenodoxin] + 2 H2O. It catalyses the reaction (1S)-1,25-dihydroxy-24-oxocalciol + 2 reduced [adrenodoxin] + O2 + 2 H(+) = (1S)-1,23,25-trihydroxy-24-oxocalciol + 2 oxidized [adrenodoxin] + H2O. The catalysed reaction is (1S)-1,23-dihydroxy-24,25,26,27-tetranorcalciol + 2 reduced [adrenodoxin] + O2 + 2 H(+) = (1S)-1-hydroxy-23-oxo-24,25,26,27-tetranorcalciol + 2 oxidized [adrenodoxin] + 2 H2O. It carries out the reaction (1S)-1-hydroxy-23-oxo-24,25,26,27-tetranorcalciol + 2 reduced [adrenodoxin] + O2 + H(+) = calcitroate + 2 oxidized [adrenodoxin] + H2O. The enzyme catalyses calcidiol + 2 reduced [adrenodoxin] + O2 + 2 H(+) = secalciferol + 2 oxidized [adrenodoxin] + H2O. It catalyses the reaction secalciferol + 2 reduced [adrenodoxin] + O2 + 2 H(+) = 25-hydroxy-24-oxocalciol + 2 oxidized [adrenodoxin] + 2 H2O. The catalysed reaction is 25-hydroxy-24-oxocalciol + 2 reduced [adrenodoxin] + O2 + 2 H(+) = 23S,25-dihydroxy-24-oxocholecalciferol + 2 oxidized [adrenodoxin] + H2O. It carries out the reaction 20S,23-dihydroxycholecalciferol + 2 reduced [adrenodoxin] + O2 + 2 H(+) = 20S,23,25-trihydroxycholecalciferol + 2 oxidized [adrenodoxin] + H2O. The enzyme catalyses 20S,23-dihydroxycholecalciferol + 2 reduced [adrenodoxin] + O2 + 2 H(+) = 20S,23,24-trihydroxycholecalciferol + 2 oxidized [adrenodoxin] + H2O. It catalyses the reaction 20S-hydroxycholecalciferol + 2 reduced [adrenodoxin] + O2 + 2 H(+) = 20S,25-dihydroxycholecalciferol + 2 oxidized [adrenodoxin] + H2O. The catalysed reaction is 20S-hydroxycholecalciferol + 2 reduced [adrenodoxin] + O2 + 2 H(+) = 20S,24S-dihydroxycholecalciferol + 2 oxidized [adrenodoxin] + H2O. It carries out the reaction 20S-hydroxycholecalciferol + 2 reduced [adrenodoxin] + O2 + 2 H(+) = 20S,24R-dihydroxycholecalciferol + 2 oxidized [adrenodoxin] + H2O. Its function is as follows. A cytochrome P450 monooxygenase with a key role in vitamin D catabolism and calcium homeostasis. Via C24-oxidation pathway, catalyzes the inactivation of both the vitamin D precursor calcidiol (25-hydroxyvitamin D(3)) and the active hormone calcitriol (1-alpha,25-dihydroxyvitamin D(3)). With initial hydroxylation at C-24 (via C24-oxidation pathway), performs a sequential 6-step oxidation of calcitriol leading to the formation of the biliary metabolite calcitroic acid. Hydroxylates at C-24 or C-25 other vitamin D active metabolites, such as CYP11A1-derived secosteroids 20S-hydroxycholecalciferol and 20S,23-dihydroxycholecalciferol. Mechanistically, uses molecular oxygen inserting one oxygen atom into a substrate, and reducing the second into a water molecule, with two electrons provided by NADPH via FDXR/adrenodoxin reductase and FDX1/adrenodoxin. In Mus musculus (Mouse), this protein is 1,25-dihydroxyvitamin D(3) 24-hydroxylase, mitochondrial.